We begin with the raw amino-acid sequence, 230 residues long: Ethylene-responsive transcription factor ERF012 (230 aa).

Positions 1 to 17 (MVKQERKIQTSSTKKEM) are enriched in basic and acidic residues. The interval 1-51 (MVKQERKIQTSSTKKEMPLSSSPSSSSSSSSSSSSSSCKNKNKKSKIKKYK) is disordered. The span at 20–39 (SSSPSSSSSSSSSSSSSSCK) shows a compositional bias: low complexity. A compositionally biased stretch (basic residues) spans 40–51 (NKNKKSKIKKYK). The segment at residues 49–106 (KYKGVRMRSWGSWVSEIRAPNQKTRIWLGSYSTAEAAARAYDVALLCLKGPQANLNFP) is a DNA-binding region (AP2/ERF).

It belongs to the AP2/ERF transcription factor family. ERF subfamily. As to expression, expressed cotyledons, ovules and seeds of immature siliques.

It localises to the nucleus. In terms of biological role, transcriptional activator involved in the regulation of plant development and tolerance to abiotic stresses. Involved in salt and osmotic stress response pathways. May be regulated by the stress-related genes RD29A, RD22, DREB1A or P5CS during stress response. Binds to the GCC-box pathogenesis-related promoter element. May be involved in the regulation of gene expression by stress factors and by components of stress signal transduction pathways. In Arabidopsis thaliana (Mouse-ear cress), this protein is Ethylene-responsive transcription factor ERF012 (ERF012).